Consider the following 271-residue polypeptide: MAPRSFWKGYLKLSLVTCPVVMAPAKSEKEKLRFHTLNRATGNRVQSRYIDSVSGKPVDSADQVKGFPRDDQSYVMLEDEELDSVALESARTIDIELFAPADSIDWIWYDAPHYLTPGDEVGEEAFAVIREAMKATKMVGISRLVLYRRERAVLLEPRGKGIILWTLRYGDEVRDPKLYFDAIKDQKPVPELLSLVNRLIEERVKPWSPEMASDPVQDRLRDIIEAKKTPPAKKTKAEEKTGKGSAESNVIDIMDALRKSLGPAAKKPKGR.

In terms of domain architecture, Ku spans 12–194 (KLSLVTCPVV…DQKPVPELLS (183 aa)). The interval 225–249 (EAKKTPPAKKTKAEEKTGKGSAESN) is disordered.

The protein belongs to the prokaryotic Ku family. In terms of assembly, homodimer. Interacts with LigD.

Functionally, with LigD forms a non-homologous end joining (NHEJ) DNA repair enzyme, which repairs dsDNA breaks with reduced fidelity. Binds linear dsDNA with 5'- and 3'- overhangs but not closed circular dsDNA nor ssDNA. Recruits and stimulates the ligase activity of LigD. The polypeptide is Non-homologous end joining protein Ku (Methylocella silvestris (strain DSM 15510 / CIP 108128 / LMG 27833 / NCIMB 13906 / BL2)).